The following is a 359-amino-acid chain: 3-dehydroquinate synthase (359 aa).

NAD(+) contacts are provided by residues 71-76 (DGEQFK), 105-109 (GVIGD), 129-130 (TT), Lys-142, Lys-151, and 169-172 (CLHT). Positions 184, 247, and 264 each coordinate Zn(2+).

The protein belongs to the sugar phosphate cyclases superfamily. Dehydroquinate synthase family. Co(2+) serves as cofactor. It depends on Zn(2+) as a cofactor. NAD(+) is required as a cofactor.

It localises to the cytoplasm. The enzyme catalyses 7-phospho-2-dehydro-3-deoxy-D-arabino-heptonate = 3-dehydroquinate + phosphate. The protein operates within metabolic intermediate biosynthesis; chorismate biosynthesis; chorismate from D-erythrose 4-phosphate and phosphoenolpyruvate: step 2/7. Functionally, catalyzes the conversion of 3-deoxy-D-arabino-heptulosonate 7-phosphate (DAHP) to dehydroquinate (DHQ). This is 3-dehydroquinate synthase from Shewanella sp. (strain W3-18-1).